Here is a 256-residue protein sequence, read N- to C-terminus: GTP cyclohydrolase FolE2 (256 aa).

This sequence belongs to the GTP cyclohydrolase IV family.

The enzyme catalyses GTP + H2O = 7,8-dihydroneopterin 3'-triphosphate + formate + H(+). It functions in the pathway cofactor biosynthesis; 7,8-dihydroneopterin triphosphate biosynthesis; 7,8-dihydroneopterin triphosphate from GTP: step 1/1. In terms of biological role, converts GTP to 7,8-dihydroneopterin triphosphate. The polypeptide is GTP cyclohydrolase FolE2 (Caldicellulosiruptor saccharolyticus (strain ATCC 43494 / DSM 8903 / Tp8T 6331)).